We begin with the raw amino-acid sequence, 165 residues long: MVILGVDPGLAIVGYALIEKQGNKYRVIDYGSINTPSKLESVDRLKIIHTDMVNIINKYNPDQMAVEKLFFNKNVKTAIEVGQARGVILLAGSQARLKIYEYTPLQVKQAVAGYGRAHKSQVQRMVKALLNLNEIPKPDDVADALAISICHGNSYRLNRKWGTKG.

Catalysis depends on residues Asp7, Glu67, and Asp140. 3 residues coordinate Mg(2+): Asp7, Glu67, and Asp140.

This sequence belongs to the RuvC family. Homodimer which binds Holliday junction (HJ) DNA. The HJ becomes 2-fold symmetrical on binding to RuvC with unstacked arms; it has a different conformation from HJ DNA in complex with RuvA. In the full resolvosome a probable DNA-RuvA(4)-RuvB(12)-RuvC(2) complex forms which resolves the HJ. Mg(2+) serves as cofactor.

Its subcellular location is the cytoplasm. The enzyme catalyses Endonucleolytic cleavage at a junction such as a reciprocal single-stranded crossover between two homologous DNA duplexes (Holliday junction).. The RuvA-RuvB-RuvC complex processes Holliday junction (HJ) DNA during genetic recombination and DNA repair. Endonuclease that resolves HJ intermediates. Cleaves cruciform DNA by making single-stranded nicks across the HJ at symmetrical positions within the homologous arms, yielding a 5'-phosphate and a 3'-hydroxyl group; requires a central core of homology in the junction. The consensus cleavage sequence is 5'-(A/T)TT(C/G)-3'. Cleavage occurs on the 3'-side of the TT dinucleotide at the point of strand exchange. HJ branch migration catalyzed by RuvA-RuvB allows RuvC to scan DNA until it finds its consensus sequence, where it cleaves and resolves the cruciform DNA. The chain is Crossover junction endodeoxyribonuclease RuvC from Halothermothrix orenii (strain H 168 / OCM 544 / DSM 9562).